The sequence spans 339 residues: UDP-N-acetylglucosamine--N-acetylmuramyl-(pentapeptide) pyrophosphoryl-undecaprenol N-acetylglucosamine transferase (339 aa).

UDP-N-acetyl-alpha-D-glucosamine is bound by residues 11 to 13, Asn-127, Arg-170, Ser-188, Ile-235, and Gln-280; that span reads TGG.

This sequence belongs to the glycosyltransferase 28 family. MurG subfamily.

The protein resides in the cell inner membrane. The catalysed reaction is di-trans,octa-cis-undecaprenyl diphospho-N-acetyl-alpha-D-muramoyl-L-alanyl-D-glutamyl-meso-2,6-diaminopimeloyl-D-alanyl-D-alanine + UDP-N-acetyl-alpha-D-glucosamine = di-trans,octa-cis-undecaprenyl diphospho-[N-acetyl-alpha-D-glucosaminyl-(1-&gt;4)]-N-acetyl-alpha-D-muramoyl-L-alanyl-D-glutamyl-meso-2,6-diaminopimeloyl-D-alanyl-D-alanine + UDP + H(+). It participates in cell wall biogenesis; peptidoglycan biosynthesis. In terms of biological role, cell wall formation. Catalyzes the transfer of a GlcNAc subunit on undecaprenyl-pyrophosphoryl-MurNAc-pentapeptide (lipid intermediate I) to form undecaprenyl-pyrophosphoryl-MurNAc-(pentapeptide)GlcNAc (lipid intermediate II). The protein is UDP-N-acetylglucosamine--N-acetylmuramyl-(pentapeptide) pyrophosphoryl-undecaprenol N-acetylglucosamine transferase of Thermotoga neapolitana (strain ATCC 49049 / DSM 4359 / NBRC 107923 / NS-E).